Here is a 75-residue protein sequence, read N- to C-terminus: Putative membrane protein insertion efficiency factor (75 aa).

Belongs to the UPF0161 family.

It is found in the cell membrane. In terms of biological role, could be involved in insertion of integral membrane proteins into the membrane. In Bacillus subtilis (strain 168), this protein is Putative membrane protein insertion efficiency factor (ytjA).